The following is a 553-amino-acid chain: Meiotic expression up-regulated protein 18 (553 aa).

A disordered region spans residues 267–305 (SNETLCSNDSKHRIARLKNEDNTQKPISKKRKSKKASHK). A compositionally biased stretch (basic and acidic residues) spans 275-289 (DSKHRIARLKNEDNT). A compositionally biased stretch (basic residues) spans 293–304 (ISKKRKSKKASH).

The polypeptide is Meiotic expression up-regulated protein 18 (meu18) (Schizosaccharomyces pombe (strain 972 / ATCC 24843) (Fission yeast)).